The following is a 530-amino-acid chain: Autoinducer-2 kinase (530 aa).

It belongs to the FGGY kinase family.

The protein resides in the cytoplasm. It carries out the reaction (S)-4,5-dihydroxypentane-2,3-dione + ATP = (2S)-2-hydroxy-3,4-dioxopentyl phosphate + ADP + H(+). Functionally, catalyzes the phosphorylation of autoinducer-2 (AI-2) to phospho-AI-2, which subsequently inactivates the transcriptional regulator LsrR and leads to the transcription of the lsr operon. Phosphorylates the ring-open form of (S)-4,5-dihydroxypentane-2,3-dione (DPD), which is the precursor to all AI-2 signaling molecules, at the C5 position. This chain is Autoinducer-2 kinase, found in Yersinia pestis bv. Antiqua (strain Antiqua).